A 311-amino-acid polypeptide reads, in one-letter code: Methionyl-tRNA formyltransferase (311 aa).

Residue 110–113 (SLLP) coordinates (6S)-5,6,7,8-tetrahydrofolate.

It belongs to the Fmt family.

It catalyses the reaction L-methionyl-tRNA(fMet) + (6R)-10-formyltetrahydrofolate = N-formyl-L-methionyl-tRNA(fMet) + (6S)-5,6,7,8-tetrahydrofolate + H(+). Functionally, attaches a formyl group to the free amino group of methionyl-tRNA(fMet). The formyl group appears to play a dual role in the initiator identity of N-formylmethionyl-tRNA by promoting its recognition by IF2 and preventing the misappropriation of this tRNA by the elongation apparatus. In Streptococcus pyogenes serotype M3 (strain ATCC BAA-595 / MGAS315), this protein is Methionyl-tRNA formyltransferase.